Here is an 87-residue protein sequence, read N- to C-terminus: Toxin RelG (87 aa).

This sequence belongs to the RelE toxin family. Interacts with cognate antitoxin RelF, which neutralizes the toxin. Also interacts with non-cognate antitoxin RelB in vitro, in M.smegmatis this neutralizes the toxicity of this toxin.

Its function is as follows. Toxic component of a type II toxin-antitoxin (TA) system. Has RNase activity and preferentially cleaves at the 3'-end of purine ribonucleotides. Overexpression in M.tuberculosis or M.smegmatis inhibits colony formation in a bacteriostatic rather than bacteriocidal fashion. Its toxic effect is neutralized by coexpression with cognate antitoxin RelB2 (shown only for M.smegmatis). Overexpression also increases the number of gentamicin-tolerant and levofloxacin-tolerant persister cells. Functionally, in combination with cognate antitoxin RelF represses its own promoter. Has been seen to bind DNA in complex with antitoxin RelF but not alone. The sequence is that of Toxin RelG (relG) from Mycobacterium tuberculosis (strain ATCC 25618 / H37Rv).